Reading from the N-terminus, the 390-residue chain is Phosphoglycerate kinase (390 aa).

Substrate is bound by residues 21 to 23 (DMN), arginine 36, 59 to 62 (HLGR), arginine 113, and arginine 146. ATP-binding positions include lysine 197, glutamate 319, and 345-348 (GGDT).

Belongs to the phosphoglycerate kinase family. As to quaternary structure, monomer.

Its subcellular location is the cytoplasm. The enzyme catalyses (2R)-3-phosphoglycerate + ATP = (2R)-3-phospho-glyceroyl phosphate + ADP. Its pathway is carbohydrate degradation; glycolysis; pyruvate from D-glyceraldehyde 3-phosphate: step 2/5. This Laribacter hongkongensis (strain HLHK9) protein is Phosphoglycerate kinase.